The chain runs to 155 residues: 2-C-methyl-D-erythritol 2,4-cyclodiphosphate synthase (155 aa).

Residues D8 and H10 each coordinate a divalent metal cation. Residues 8 to 10 and 34 to 35 each bind 4-CDP-2-C-methyl-D-erythritol 2-phosphate; these read DVH and HS. An a divalent metal cation-binding site is contributed by H42. 4-CDP-2-C-methyl-D-erythritol 2-phosphate contacts are provided by residues 56 to 58, 61 to 65, 100 to 106, 132 to 135, F139, and K142; these read DIG, FPDSD, AQKPKML, and TTEE.

The protein belongs to the IspF family. Homotrimer. A divalent metal cation serves as cofactor.

The enzyme catalyses 4-CDP-2-C-methyl-D-erythritol 2-phosphate = 2-C-methyl-D-erythritol 2,4-cyclic diphosphate + CMP. It participates in isoprenoid biosynthesis; isopentenyl diphosphate biosynthesis via DXP pathway; isopentenyl diphosphate from 1-deoxy-D-xylulose 5-phosphate: step 4/6. Functionally, involved in the biosynthesis of isopentenyl diphosphate (IPP) and dimethylallyl diphosphate (DMAPP), two major building blocks of isoprenoid compounds. Catalyzes the conversion of 4-diphosphocytidyl-2-C-methyl-D-erythritol 2-phosphate (CDP-ME2P) to 2-C-methyl-D-erythritol 2,4-cyclodiphosphate (ME-CPP) with a corresponding release of cytidine 5-monophosphate (CMP). The chain is 2-C-methyl-D-erythritol 2,4-cyclodiphosphate synthase from Clostridium botulinum (strain ATCC 19397 / Type A).